Here is a 306-residue protein sequence, read N- to C-terminus: uncharacterized protein (306 aa).

Transmembrane regions (helical) follow at residues 6–26, 35–55, 69–89, 98–118, 122–142, 154–174, 186–206, 211–231, 247–267, and 281–301; these read LLGFTFALITAMAWGSLPIAL, AQTIVWYRFIIAAVSLLALLA, YAWIMLIGVIGLTSNFLLFSS, VAQIFIHLSSFGMLICGVLIF, LGLHQKIGLFLLLIGLGLFFN, YSTGVILGVGGALIWVAYGMA, QILLMMYLGCAIAFMPMADFS, LTPLALICFIYCCLNTLIGYG, VVITLVPLFTILFSHIAHYFS, and YIGAFVVVCGAILSAIGHKLL. 2 consecutive EamA domains span residues 17–142 and 166–296; these read MAWG…LFFN and LIWV…LSAI.

It belongs to the EamA transporter family.

It localises to the cell membrane. This is an uncharacterized protein from Haemophilus influenzae (strain ATCC 51907 / DSM 11121 / KW20 / Rd).